We begin with the raw amino-acid sequence, 223 residues long: Ribonuclease HII (223 aa).

An RNase H type-2 domain is found at 32 to 223; the sequence is LYIAGVDEVG…LKKRYRDYMS (192 aa). A divalent metal cation-binding residues include Asp-38, Glu-39, and Asp-130.

The protein belongs to the RNase HII family. It depends on Mn(2+) as a cofactor. Requires Mg(2+) as cofactor.

It is found in the cytoplasm. The catalysed reaction is Endonucleolytic cleavage to 5'-phosphomonoester.. In terms of biological role, endonuclease that specifically degrades the RNA of RNA-DNA hybrids. This Bartonella henselae (strain ATCC 49882 / DSM 28221 / CCUG 30454 / Houston 1) (Rochalimaea henselae) protein is Ribonuclease HII.